The chain runs to 112 residues: MNALTEMKCEACQADAPKVTDAELAELVGMIPDWGVEIRDGIMQLERVYKFKNFKLAMAFTNKLADLAEAEFHHPGILTEWGKVTVTWWSHSIKGLHKNDFIMAAKTDQLLD.

The protein belongs to the pterin-4-alpha-carbinolamine dehydratase family.

The enzyme catalyses (4aS,6R)-4a-hydroxy-L-erythro-5,6,7,8-tetrahydrobiopterin = (6R)-L-erythro-6,7-dihydrobiopterin + H2O. The chain is Putative pterin-4-alpha-carbinolamine dehydratase from Shewanella frigidimarina (strain NCIMB 400).